The sequence spans 929 residues: Isoleucine--tRNA ligase (929 aa).

The 'HIGH' region signature appears at 58-68; the sequence is PYANGDIHIGH. Glu568 provides a ligand contact to L-isoleucyl-5'-AMP. The short motif at 609 to 613 is the 'KMSKS' region element; the sequence is KMSKS. Residue Lys612 participates in ATP binding. Zn(2+) is bound by residues Cys892, Cys895, Cys912, and Cys915.

This sequence belongs to the class-I aminoacyl-tRNA synthetase family. IleS type 1 subfamily. In terms of assembly, monomer. Requires Zn(2+) as cofactor.

The protein resides in the cytoplasm. The enzyme catalyses tRNA(Ile) + L-isoleucine + ATP = L-isoleucyl-tRNA(Ile) + AMP + diphosphate. Functionally, catalyzes the attachment of isoleucine to tRNA(Ile). As IleRS can inadvertently accommodate and process structurally similar amino acids such as valine, to avoid such errors it has two additional distinct tRNA(Ile)-dependent editing activities. One activity is designated as 'pretransfer' editing and involves the hydrolysis of activated Val-AMP. The other activity is designated 'posttransfer' editing and involves deacylation of mischarged Val-tRNA(Ile). This Thiobacillus denitrificans (strain ATCC 25259 / T1) protein is Isoleucine--tRNA ligase.